The chain runs to 935 residues: Progesterone receptor (935 aa).

Residues 1–49 form a disordered region; the sequence is MTELKAKGLRAPHVAGSPSSPKVGSPLPCRQATGQFPGSQTSDTLPEVS. Residues 1–164 form an AF3; mediates transcriptional activation region; the sequence is MTELKAKGLR…PATQRVLSPL (164 aa). The interval 1–568 is modulating, Pro-Rich; the sequence is MTELKAKGLR…YSFESLPQKI (568 aa). Serine 20 carries the post-translational modification Phosphoserine. Over residues 32 to 44 the composition is skewed to polar residues; it reads ATGQFPGSQTSDT. The LXXL motif 1 signature appears at 55 to 59; that stretch reads LDGLL. The segment at 62–158 is disordered; it reads RICQAQDPPD…EDPPAAPATQ (97 aa). Residue serine 81 is modified to Phosphoserine. An LXXL motif 2 motif is present at residues 115–119; that stretch reads LDTLW. Residues serine 130 and serine 162 each carry the phosphoserine modification. The interval 165 to 305 is mediates transcriptional transrepression; that stretch reads MSRSGGKAGD…LATTVTDFIH (141 aa). A Nuclear localization signal motif is present at residues 183 to 187; the sequence is KVLPR. The interval 187 to 233 is disordered; it reads RGLSPSRQLLLPTSGSPHWSGAPVKPSPQPAAVEVEEEDGSESEDSA. At serine 190 the chain carries Phosphoserine. Residues 191–203 show a composition bias toward polar residues; sequence PSRQLLLPTSGSP. At serine 213 the chain carries Phosphoserine. Over residues 220 to 231 the composition is skewed to acidic residues; it reads EVEEEDGSESED. Serine 294 carries the post-translational modification Phosphoserine; by MAPK1. Residues 328-365 are disordered; it reads SYDGGSGAASAFAPPRSSPSASSTPVPGSDFPDCAYAP. Residues 335-356 are compositionally biased toward low complexity; it reads AASAFAPPRSSPSASSTPVPGS. Position 345 is a phosphoserine; by MAPK (serine 345). Residue lysine 388 forms a Glycyl lysine isopeptide (Lys-Gly) (interchain with G-Cter in SUMO); alternate linkage. Lysine 388 is covalently cross-linked (Glycyl lysine isopeptide (Lys-Gly) (interchain with G-Cter in ubiquitin); alternate). Residues 390-452 are disordered; that stretch reads EEEGAEASTR…PASASVSSAS (63 aa). A Phosphoserine; by CDK2 modification is found at serine 400. Pro residues predominate over residues 418–433; that stretch reads PLGPPPPLPPRAPPSR. Low complexity predominate over residues 434–452; it reads PGEAAVTAAPASASVSSAS. Residues 456-548 are AF1; mediates transcriptional activation; that stretch reads STLECILYKA…VYPPYLNYLR (93 aa). Lysine 533 participates in a covalent cross-link: Glycyl lysine isopeptide (Lys-Gly) (interchain with G-Cter in SUMO). 2 NR C4-type zinc fingers span residues 569–589 and 605–629; these read CLICGDEASGCHYGVLTCGSC and CAGRNDCIVDKIRRKNCPACRLRKC. The segment at residues 569–641 is a DNA-binding region (nuclear receptor); it reads CLICGDEASG…AGMVLGGRKF (73 aa). Serine 678 carries the phosphoserine modification. One can recognise an NR LBD domain in the interval 681–915; the sequence is QDIQLIPPLI…EFPEMMSEVI (235 aa). The interval 689 to 935 is AF2; mediates transcriptional activation; that stretch reads LINLLLSIEP…MVKPLLFHKK (247 aa). Position 768 (arginine 768) interacts with progesterone.

This sequence belongs to the nuclear hormone receptor family. Interacts with SMARD1 and UNC45A. Interacts with CUEDC2; the interaction promotes ubiquitination, decreases sumoylation, and represses transcriptional activity. Interacts with PIAS3; the interaction promotes sumoylation of PR in a hormone-dependent manner, inhibits DNA-binding, and alters nuclear export. Interacts with SP1; the interaction requires ligand-induced phosphorylation on Ser-345 by ERK1/2-MAPK. Interacts with PRMT2. Interacts with NCOA2 and NCOA1. Interacts with KLF9. Interacts with GTF2B. Phosphorylated on multiple serine sites. Several of these sites are hormone-dependent. Phosphorylation on Ser-294 is highly hormone-dependent and modulates ubiquitination and sumoylation on Lys-388. Phosphorylation on Ser-345 also requires induction by hormone. Basal phosphorylation on Ser-81, Ser-162, Ser-190 and Ser-400 is increased in response to progesterone and can be phosphorylated in vitro by the CDK2-A1 complex. Increased levels of phosphorylation on Ser-400 also in the presence of EGF, heregulin, IGF, PMA and FBS. Phosphorylation at this site by CDK2 is ligand-independent, and increases nuclear translocation and transcriptional activity. Phosphorylation at Ser-162 and Ser-294, but not at Ser-190, is impaired during the G(2)/M phase of the cell cycle. Phosphorylation on Ser-345 by ERK1/2 MAPK is required for interaction with SP1. Post-translationally, sumoylation is hormone-dependent and represses transcriptional activity. Sumoylation on all three sites is enhanced by PIAS3. Desumoylated by SENP1. Sumoylation on Lys-388, the main site of sumoylation, is repressed by ubiquitination on the same site, and modulated by phosphorylation at Ser-294. In terms of processing, ubiquitination is hormone-dependent and represses sumoylation on the same site. Promoted by MAPK-mediated phosphorylation on Ser-294. Ubiquitinated by UBR5, leading to its degradation: UBR5 specifically recognizes and binds ligand-bound PGR when it is not associated with coactivators (NCOAs). In presence of NCOAs, the UBR5-degron is not accessible, preventing its ubiquitination and degradation. Palmitoylated by ZDHHC7 and ZDHHC21. Palmitoylation is required for plasma membrane targeting and for rapid intracellular signaling via ERK and AKT kinases and cAMP generation.

It is found in the nucleus. The protein localises to the cytoplasm. In terms of biological role, the steroid hormones and their receptors are involved in the regulation of eukaryotic gene expression and affect cellular proliferation and differentiation in target tissues. Transcriptional activator of several progesteron-dependent promoters in a variety of cell types. Involved in activation of SRC-dependent MAPK signaling on hormone stimulation. This is Progesterone receptor (PGR) from Sapajus apella (Brown-capped capuchin).